Here is a 399-residue protein sequence, read N- to C-terminus: Succinate--CoA ligase [ADP-forming] subunit beta (399 aa).

One can recognise an ATP-grasp domain in the interval 9–254; sequence KAVLQPFGVS…TTEEDAKEIE (246 aa). ATP contacts are provided by residues Lys46, 53–55, Glu109, Ser112, and Glu117; that span reads GRG. Mg(2+) contacts are provided by Asn209 and Asp223. Residues Asn274 and 331–333 each bind substrate; that span reads GIM.

This sequence belongs to the succinate/malate CoA ligase beta subunit family. In terms of assembly, heterotetramer of two alpha and two beta subunits. It depends on Mg(2+) as a cofactor.

It carries out the reaction succinate + ATP + CoA = succinyl-CoA + ADP + phosphate. It catalyses the reaction GTP + succinate + CoA = succinyl-CoA + GDP + phosphate. It participates in carbohydrate metabolism; tricarboxylic acid cycle; succinate from succinyl-CoA (ligase route): step 1/1. In terms of biological role, succinyl-CoA synthetase functions in the citric acid cycle (TCA), coupling the hydrolysis of succinyl-CoA to the synthesis of either ATP or GTP and thus represents the only step of substrate-level phosphorylation in the TCA. The beta subunit provides nucleotide specificity of the enzyme and binds the substrate succinate, while the binding sites for coenzyme A and phosphate are found in the alpha subunit. The polypeptide is Succinate--CoA ligase [ADP-forming] subunit beta (Rhodopseudomonas palustris (strain BisA53)).